The primary structure comprises 657 residues: Glycogen debranching enzyme (657 aa).

D336 (nucleophile) is an active-site residue. E371 functions as the Proton donor in the catalytic mechanism. Residues 460-479 (ANGEENRDGTNNNYSNNHGK) form a disordered region.

This sequence belongs to the glycosyl hydrolase 13 family.

It catalyses the reaction Hydrolysis of (1-&gt;6)-alpha-D-glucosidic linkages to branches with degrees of polymerization of three or four glucose residues in limit dextrin.. Its pathway is glycan degradation; glycogen degradation. In terms of biological role, removes maltotriose and maltotetraose chains that are attached by 1,6-alpha-linkage to the limit dextrin main chain, generating a debranched limit dextrin. The protein is Glycogen debranching enzyme of Escherichia coli O6:K15:H31 (strain 536 / UPEC).